The primary structure comprises 425 residues: ATP-dependent RNA helicase RhlB (425 aa).

Positions 9–37 (TRFADLALHPKIQQAISSAGFEYCTPIQA) match the Q motif motif. Residues 40-218 (LPVALSNRDV…YEHMNAPTKL (179 aa)) enclose the Helicase ATP-binding domain. Residue 53–60 (AQTGTGKT) coordinates ATP. The DEAD box motif lies at 164–167 (DEAD). The 148-residue stretch at 242–389 (KFPLLLTLIE…VTKYDGDALL (148 aa)) folds into the Helicase C-terminal domain. The segment at 391–425 (DLRRPRPIQRRRRHNSGGGKGKPRGRRSGPPRNAS) is disordered. A compositionally biased stretch (basic residues) spans 395 to 419 (PRPIQRRRRHNSGGGKGKPRGRRSG).

The protein belongs to the DEAD box helicase family. RhlB subfamily. Component of the RNA degradosome, which is a multiprotein complex involved in RNA processing and mRNA degradation.

Its subcellular location is the cytoplasm. The catalysed reaction is ATP + H2O = ADP + phosphate + H(+). Functionally, DEAD-box RNA helicase involved in RNA degradation. Has RNA-dependent ATPase activity and unwinds double-stranded RNA. In Idiomarina loihiensis (strain ATCC BAA-735 / DSM 15497 / L2-TR), this protein is ATP-dependent RNA helicase RhlB.